The following is a 181-amino-acid chain: Small acidic protein (181 aa).

Residues 1–181 (MSAARESHPH…KMMFVKSSGS (181 aa)) are disordered. Lysine 13 is covalently cross-linked (Glycyl lysine isopeptide (Lys-Gly) (interchain with G-Cter in SUMO2)). Phosphoserine is present on residues serine 15 and serine 17. The segment covering 48–78 (GKKEHTGRLVIGDHKSTSHFRTGEEDKKINE) has biased composition (basic and acidic residues). Residue lysine 62 forms a Glycyl lysine isopeptide (Lys-Gly) (interchain with G-Cter in SUMO2) linkage. The residue at position 63 (serine 63) is a Phosphoserine. A Glycyl lysine isopeptide (Lys-Gly) (interchain with G-Cter in SUMO2) cross-link involves residue lysine 75. A phosphoserine mark is found at serine 87, serine 125, and serine 145. The span at 106 to 147 (EVDDHDGEGDVAGDDDDDDSPDPESPDDSESDSESEKEESTE) shows a compositional bias: acidic residues. Over residues 151–169 (AAEHPDEVEDSKNKKDAKS) the composition is skewed to basic and acidic residues. An N6-acetyllysine mark is found at lysine 172 and lysine 177.

It belongs to the SMAP family.

The protein is Small acidic protein (SMAP) of Bos taurus (Bovine).